Here is a 410-residue protein sequence, read N- to C-terminus: Chitin deacetylase 3 (410 aa).

The first 18 residues, 1-18 (MYGHLSLSTLSLLAVVAA), serve as a signal peptide directing secretion. A propeptide spanning residues 19–39 (APFPESWLQPRDSDVSQLFRR) is cleaved from the precursor. N-linked (GlcNAc...) asparagine glycans are attached at residues asparagine 61 and asparagine 80. A NodB homology domain is found at 124-314 (KVWALSFDDG…KAVANGWSVK (191 aa)). The Proton acceptor role is filled by aspartate 131. Aspartate 131 is a binding site for acetate. Residue aspartate 132 participates in Co(2+) binding. Asparagine 149 carries an N-linked (GlcNAc...) asparagine glycan. Co(2+) contacts are provided by histidine 183 and histidine 187. Residue tyrosine 225 coordinates acetate. The N-linked (GlcNAc...) asparagine glycan is linked to asparagine 279. Histidine 289 acts as the Proton donor in catalysis. The N-linked (GlcNAc...) asparagine glycan is linked to asparagine 293. A lipid anchor (GPI-anchor amidated serine) is attached at serine 385. The propeptide at 386-410 (SSWPIANRPSLFVIACGLALAAIMV) is removed in mature form.

It belongs to the polysaccharide deacetylase family. It depends on Co(2+) as a cofactor.

Its subcellular location is the cell membrane. It carries out the reaction [(1-&gt;4)-N-acetyl-beta-D-glucosaminyl](n) + n H2O = chitosan + n acetate. Functionally, hydrolyzes the N-acetamido groups of N-acetyl-D-glucosamine residues in chitin to form chitosan and acetate. Chitosan is required to anchor melanin to the cell wall, for maintenance of cell wall integrity, and for proper cytokinesis. Chitosan offers an advantage during infection as it is less readily detected than chitin by host immunosurveillance mechanisms. The polypeptide is Chitin deacetylase 3 (Cryptococcus neoformans var. neoformans serotype D (strain JEC21 / ATCC MYA-565) (Filobasidiella neoformans)).